We begin with the raw amino-acid sequence, 221 residues long: Oxaloacetate tautomerase oaa1, mitochondrial (221 aa).

Mg(2+) is bound by residues Glu-59, Glu-61, and Asp-93.

The protein belongs to the FAH family. It depends on Mg(2+) as a cofactor. The cofactor is Mn(2+).

It localises to the mitochondrion. The protein localises to the cytoplasm. The enzyme catalyses oxaloacetate = enol-oxaloacetate. Its function is as follows. Tautomerase that converts enol-oxaloacetate, a strong inhibitor of succinate dehydrogenase, to the physiological keto form of oxaloacetate. The chain is Oxaloacetate tautomerase oaa1, mitochondrial from Schizosaccharomyces pombe (strain 972 / ATCC 24843) (Fission yeast).